Consider the following 576-residue polypeptide: Eukaryotic translation initiation factor 2A (576 aa).

WD repeat units lie at residues 71-119, 266-307, 308-349, and 351-396; these read LPAA…LVFS, DREG…VSII, PPAP…KKIT, and VEAA…MFYE. 2 disordered regions span residues 422-461 and 475-505; these read SASLPSPPTPHASASKLAAKPSVKPAGAYRPPGARGQNST and GSANKHVNSSRQRVVPGATPVIDGNKKNNKK. Over residues 475–486 the composition is skewed to polar residues; it reads GSANKHVNSSRQ.

The protein belongs to the WD repeat EIF2A family.

The protein localises to the cytoplasm. Functions in the early steps of protein synthesis of a small number of specific mRNAs. Acts by directing the binding of methionyl-tRNAi to 40S ribosomal subunits. In contrast to the eIF-2 complex, it binds methionyl-tRNAi to 40S subunits in a codon-dependent manner, whereas the eIF-2 complex binds methionyl-tRNAi to 40S subunits in a GTP-dependent manner. The protein is Eukaryotic translation initiation factor 2A of Schizosaccharomyces pombe (strain 972 / ATCC 24843) (Fission yeast).